Here is a 352-residue protein sequence, read N- to C-terminus: Endoplasmic reticulum GDP-fucose transporter (352 aa).

The next 10 membrane-spanning stretches (helical) occupy residues 9 to 29, 34 to 54, 70 to 90, 96 to 116, 126 to 146, 163 to 183, 201 to 221, 249 to 271, 276 to 298, and 305 to 325; these read LGMLFVFIGCCSNVVFLELII, GAGNLITFAQFLFIALEGLVF, YVILVALFFGANVCNNYAFNF, LHMIFRSGSLMANMIMGIVLL, SSVAMITAGIILCTLVSSGDV, FFWWTVGIGLLTIALLVTAYM, ALFFTHMLPLPGFLIMAGNIV, LMLFYLLCNVVTQYVCISAVYVL, ASLTVTLVVTLRKFVSLLFSIIY, and LNHWVGTILVFFGTILFANVI. Positions 350–352 match the Prevents secretion from ER motif; it reads KVE.

It belongs to the nucleotide-sugar transporter family. SLC35B subfamily.

The protein localises to the endoplasmic reticulum membrane. Functionally, sugar transporter that specifically mediates the transport of UDP-N-acetylglucosamine (UDP-GlcNAc), GDP-fucose and UDP-xylose. Functions redundantly with Gfr in the O-fucosylation of Notch, positively regulating Notch signaling. Involved in the biosynthesis of heparan sulfate-glycosaminoglycan (HS-GAG) and in Dpp signaling in the wing imaginal disk. In Drosophila melanogaster (Fruit fly), this protein is Endoplasmic reticulum GDP-fucose transporter.